Consider the following 724-residue polypeptide: Ribosomal RNA large subunit methyltransferase K/L (724 aa).

A THUMP domain is found at 42 to 153 (DAQRLVLWSR…KGRATLSVDL (112 aa)).

This sequence belongs to the methyltransferase superfamily. RlmKL family.

The protein localises to the cytoplasm. It carries out the reaction guanosine(2445) in 23S rRNA + S-adenosyl-L-methionine = N(2)-methylguanosine(2445) in 23S rRNA + S-adenosyl-L-homocysteine + H(+). It catalyses the reaction guanosine(2069) in 23S rRNA + S-adenosyl-L-methionine = N(2)-methylguanosine(2069) in 23S rRNA + S-adenosyl-L-homocysteine + H(+). Its function is as follows. Specifically methylates the guanine in position 2445 (m2G2445) and the guanine in position 2069 (m7G2069) of 23S rRNA. This Xylella fastidiosa (strain M12) protein is Ribosomal RNA large subunit methyltransferase K/L.